Here is a 255-residue protein sequence, read N- to C-terminus: Ribosomal RNA small subunit methyltransferase A (255 aa).

S-adenosyl-L-methionine contacts are provided by Asn-12, Leu-14, Gly-39, Glu-60, Asp-84, and Asn-102.

Belongs to the class I-like SAM-binding methyltransferase superfamily. rRNA adenine N(6)-methyltransferase family. RsmA subfamily.

Its subcellular location is the cytoplasm. It carries out the reaction adenosine(1518)/adenosine(1519) in 16S rRNA + 4 S-adenosyl-L-methionine = N(6)-dimethyladenosine(1518)/N(6)-dimethyladenosine(1519) in 16S rRNA + 4 S-adenosyl-L-homocysteine + 4 H(+). Functionally, specifically dimethylates two adjacent adenosines (A1518 and A1519) in the loop of a conserved hairpin near the 3'-end of 16S rRNA in the 30S particle. May play a critical role in biogenesis of 30S subunits. The polypeptide is Ribosomal RNA small subunit methyltransferase A (Methylobacillus flagellatus (strain ATCC 51484 / DSM 6875 / VKM B-1610 / KT)).